We begin with the raw amino-acid sequence, 952 residues long: DNA topoisomerase 1 (952 aa).

Residues 12–135 (RRLVIVESPA…VKRMVFHEIT (124 aa)) form the Toprim domain. Residues Glu-18 and Asp-104 each contribute to the Mg(2+) site. In terms of domain architecture, Topo IA-type catalytic spans 150–602 (NQKLVDAQET…RFYFGEGDGT (453 aa)). Positions 184 to 189 (SAGRVQ) are interaction with DNA. Tyr-334 (O-(5'-phospho-DNA)-tyrosine intermediate) is an active-site residue. The interval 847 to 952 (RFGPYVTDGE…KATASKTSED (106 aa)) is disordered. Over residues 871 to 884 (TPERGYELLAEKRA) the composition is skewed to basic and acidic residues. Over residues 885-906 (KGPAKKTAKKAVKKTAAKKAPA) the composition is skewed to basic residues. Composition is skewed to low complexity over residues 907-930 (KKAAATKKTAAAKTTAAKKTAAKS) and 937-952 (AKTAAKKATASKTSED).

Belongs to the type IA topoisomerase family. Monomer. The cofactor is Mg(2+).

It catalyses the reaction ATP-independent breakage of single-stranded DNA, followed by passage and rejoining.. In terms of biological role, releases the supercoiling and torsional tension of DNA, which is introduced during the DNA replication and transcription, by transiently cleaving and rejoining one strand of the DNA duplex. Introduces a single-strand break via transesterification at a target site in duplex DNA. The scissile phosphodiester is attacked by the catalytic tyrosine of the enzyme, resulting in the formation of a DNA-(5'-phosphotyrosyl)-enzyme intermediate and the expulsion of a 3'-OH DNA strand. The free DNA strand then undergoes passage around the unbroken strand, thus removing DNA supercoils. Finally, in the religation step, the DNA 3'-OH attacks the covalent intermediate to expel the active-site tyrosine and restore the DNA phosphodiester backbone. Functionally, relaxes supercoiled plasmid in vitro; in the presence of sIHF (integration host factor) relaxation is decreased. The chain is DNA topoisomerase 1 from Streptomyces coelicolor (strain ATCC BAA-471 / A3(2) / M145).